The following is a 490-amino-acid chain: ATP synthase subunit beta, chloroplastic (490 aa).

Residue 170 to 177 (GGXGVGKT) coordinates ATP.

Belongs to the ATPase alpha/beta chains family. As to quaternary structure, F-type ATPases have 2 components, CF(1) - the catalytic core - and CF(0) - the membrane proton channel. CF(1) has five subunits: alpha(3), beta(3), gamma(1), delta(1), epsilon(1). CF(0) has four main subunits: a(1), b(1), b'(1) and c(9-12).

The protein resides in the plastid. It is found in the chloroplast thylakoid membrane. It carries out the reaction ATP + H2O + 4 H(+)(in) = ADP + phosphate + 5 H(+)(out). In terms of biological role, produces ATP from ADP in the presence of a proton gradient across the membrane. The catalytic sites are hosted primarily by the beta subunits. The protein is ATP synthase subunit beta, chloroplastic of Ipomoea coccinea (Scarlet morning-glory).